The following is a 487-amino-acid chain: Glutamyl-tRNA(Gln) amidotransferase subunit A (487 aa).

Residues Lys75 and Ser150 each act as charge relay system in the active site. The active-site Acyl-ester intermediate is Ser174.

The protein belongs to the amidase family. GatA subfamily. In terms of assembly, heterotrimer of A, B and C subunits.

It carries out the reaction L-glutamyl-tRNA(Gln) + L-glutamine + ATP + H2O = L-glutaminyl-tRNA(Gln) + L-glutamate + ADP + phosphate + H(+). Allows the formation of correctly charged Gln-tRNA(Gln) through the transamidation of misacylated Glu-tRNA(Gln) in organisms which lack glutaminyl-tRNA synthetase. The reaction takes place in the presence of glutamine and ATP through an activated gamma-phospho-Glu-tRNA(Gln). This chain is Glutamyl-tRNA(Gln) amidotransferase subunit A, found in Syntrophomonas wolfei subsp. wolfei (strain DSM 2245B / Goettingen).